Consider the following 416-residue polypeptide: PRKCA-binding protein (416 aa).

A PDZ domain is found at Lys-22–Gln-105. Residues Cys-44 and Cys-46 each coordinate Zn(2+). Thr-82 is modified (phosphothreonine). Residues Leu-144 to Val-357 enclose the AH domain. Residues Pro-373–Ser-416 form a disordered region. Acidic residues predominate over residues Asp-380 to Asp-390. Cys-414 is lipidated: S-palmitoyl cysteine; by DHHC8.

Monomer and homodimer. Interacts with CXADR. Interacts presynaptically with the glutamate receptors GRIA2, GRIA3, GRIK3, isoform 3 of GRIA4, isoform A of GRM4, GRM7 and GRM8; with NAPA and NAPB; and with BTG2. The interaction with NAPA and NAPB disrupts the interaction with GRIA2, conducting to the internalization of GRIA2. Interacts with PRKCA; with the amine transporters SLC6A2 and SLC6A3; with the channels ASIC1 and ASIC2; with the GTP-binding proteins ARF1 and ARF3; with the ephrin receptor tyrosine kinases EPHA7, EPHB1 and EPHB2; with ERBB2 and through its PDZ domain with the C-terminal tail of PRLHR. Interacts with UNC5A. Interacts (via AH domain) with NCS1/FREQ; in a calcium-dependent manner. Interacts with F-actin and associates with the ARP2/3 complex. Interacts (via PDZ domain) with ARF1 (activated); the interaction blocks Arp2/3 complex inhibition. Interacts with SORCS3. Post-translationally, phosphorylation at Thr-82 appears to inhibit the interaction with AMPA receptors. Phosphorylated on tyrosine residues by EPHB2 and on serine or threonine residues by PKC. Palmitoylation on Cys-414 is essential for long-term synaptic depression (LTD). In terms of tissue distribution, expressed in all tissues examined, with highest levels in brain and testes and lowest levels in lung.

It localises to the cytoplasm. Its subcellular location is the perinuclear region. It is found in the membrane. The protein localises to the postsynaptic density. The protein resides in the synapse. It localises to the synaptosome. Its subcellular location is the cytoskeleton. Its function is as follows. Probable adapter protein that bind to and organize the subcellular localization of a variety of membrane proteins containing some PDZ recognition sequence. Involved in the clustering of various receptors, possibly by acting at the receptor internalization level. Plays a role in synaptic plasticity by regulating the trafficking and internalization of AMPA receptors. May be regulated upon PRKCA activation. May regulate ASIC1/ASIC3 channel. Regulates actin polymerization by inhibiting the actin-nucleating activity of the Arp2/3 complex; the function is competitive with nucleation promoting factors and is linked to neuronal morphology regulation and AMPA receptor (AMPAR) endocytosis. Via interaction with the Arp2/3 complex involved in regulation of synaptic plasicity of excitatory synapses and required for spine shrinkage during long-term depression (LTD). Involved in regulation of astrocyte morphology, antagonistic to Arp2/3 complex activator WASL/N-WASP function. The polypeptide is PRKCA-binding protein (Pick1) (Mus musculus (Mouse)).